The chain runs to 335 residues: Probable cytosolic iron-sulfur protein assembly protein Ciao1 (335 aa).

7 WD repeats span residues 12 to 51 (GHKG…WSTK), 57 to 96 (GHKR…FECN), 101 to 140 (GHEN…EFEC), 146 to 185 (SHTQ…NDWD), 192 to 231 (SHTS…NSAG), 250 to 289 (QHSR…KPDE), and 301 to 335 (AHDQ…KVTE).

This sequence belongs to the WD repeat CIA1 family.

Essential component of the cytosolic iron-sulfur (Fe/S) protein assembly machinery. Required for the maturation of extramitochondrial Fe/S proteins. In Drosophila yakuba (Fruit fly), this protein is Probable cytosolic iron-sulfur protein assembly protein Ciao1.